A 258-amino-acid polypeptide reads, in one-letter code: Small ribosomal subunit protein mS40 (258 aa).

A mitochondrion-targeting transit peptide spans 1 to 35; that stretch reads MAASVLNVLLRRLPYFSPFRGAYGVQVPLQTLCTK. Position 49 is a phosphoserine (Ser49). The tract at residues 221-258 is disordered; it reads QGHLREESGPPPESMPKVPLTAPNEATSTEQAGPQSAL. Polar residues predominate over residues 244-258; that stretch reads NEATSTEQAGPQSAL.

This sequence belongs to the bacterial ribosomal protein bS18 family. Mitochondrion-specific ribosomal protein mS40 subfamily. Component of the mitochondrial ribosome small subunit (28S) which comprises a 12S rRNA and about 30 distinct proteins.

It is found in the mitochondrion. This chain is Small ribosomal subunit protein mS40, found in Bos taurus (Bovine).